Here is a 130-residue protein sequence, read N- to C-terminus: uncharacterized protein (130 aa).

This is an uncharacterized protein from Escherichia coli (strain K12).